The chain runs to 435 residues: F-box/FBD/LRR-repeat protein At5g44980 (435 aa).

The 47-residue stretch at R3–F49 folds into the F-box domain. 6 LRR repeats span residues C88 to M114, L138 to N162, H165 to R190, P191 to F217, V250 to M275, and M324 to Y349. The FBD domain maps to R355–F405.

The sequence is that of F-box/FBD/LRR-repeat protein At5g44980 from Arabidopsis thaliana (Mouse-ear cress).